A 247-amino-acid chain; its full sequence is Adenosylcobinamide-GDP ribazoletransferase (247 aa).

5 helical membrane passes run isoleucine 34–valine 54, cysteine 59–phenylalanine 79, glycine 113–leucine 133, isoleucine 138–tyrosine 158, and valine 194–isoleucine 214.

This sequence belongs to the CobS family. Mg(2+) is required as a cofactor.

Its subcellular location is the cell inner membrane. It catalyses the reaction alpha-ribazole + adenosylcob(III)inamide-GDP = adenosylcob(III)alamin + GMP + H(+). The enzyme catalyses alpha-ribazole 5'-phosphate + adenosylcob(III)inamide-GDP = adenosylcob(III)alamin 5'-phosphate + GMP + H(+). The protein operates within cofactor biosynthesis; adenosylcobalamin biosynthesis; adenosylcobalamin from cob(II)yrinate a,c-diamide: step 7/7. Its function is as follows. Joins adenosylcobinamide-GDP and alpha-ribazole to generate adenosylcobalamin (Ado-cobalamin). Also synthesizes adenosylcobalamin 5'-phosphate from adenosylcobinamide-GDP and alpha-ribazole 5'-phosphate. This chain is Adenosylcobinamide-GDP ribazoletransferase, found in Escherichia coli O81 (strain ED1a).